The following is a 434-amino-acid chain: D-inositol 3-phosphate glycosyltransferase (434 aa).

Residue His26 coordinates 1D-myo-inositol 3-phosphate. Residues 32–33 and Gly40 contribute to the UDP-N-acetyl-alpha-D-glucosamine site; that span reads QP. 1D-myo-inositol 3-phosphate is bound by residues 37–42, Lys95, Tyr128, Thr152, and Arg172; that span reads DAGGMN. Positions 246 and 251 each coordinate UDP-N-acetyl-alpha-D-glucosamine. The Mg(2+) site is built by Tyr321, Arg322, and Ala324. 2 residues coordinate UDP-N-acetyl-alpha-D-glucosamine: Glu334 and Glu342. Residue Thr348 coordinates Mg(2+).

The protein belongs to the glycosyltransferase group 1 family. MshA subfamily. As to quaternary structure, homodimer.

The enzyme catalyses 1D-myo-inositol 3-phosphate + UDP-N-acetyl-alpha-D-glucosamine = 1D-myo-inositol 2-acetamido-2-deoxy-alpha-D-glucopyranoside 3-phosphate + UDP + H(+). In terms of biological role, catalyzes the transfer of a N-acetyl-glucosamine moiety to 1D-myo-inositol 3-phosphate to produce 1D-myo-inositol 2-acetamido-2-deoxy-glucopyranoside 3-phosphate in the mycothiol biosynthesis pathway. In Thermobifida fusca (strain YX), this protein is D-inositol 3-phosphate glycosyltransferase.